The primary structure comprises 700 residues: Suprabasin (700 aa).

Residues 1-23 form the signal peptide; that stretch reads MYLVSLLSSCCLLVLLGTLPARA. Disordered stretches follow at residues 133–158, 183–258, and 283–391; these read QGGS…VANK, HAFG…VADK, and HAFG…GAHH. Residues 488-546 are a coiled coil; sequence KEAEKVAHGVQNGVNQAQKEAEKVAHGVQNGVNQAQKEAEKVAHGVQNGVNQAQKEAEK. Over residues 641 to 654 the composition is skewed to polar residues; sequence GVNQPSKEANQLLN. A disordered region spans residues 641-669; the sequence is GVNQPSKEANQLLNGSHQGQGGYGGQHGG. Over residues 658–668 the composition is skewed to gly residues; the sequence is QGQGGYGGQHG.

Detected in epidermis, in suprabasal keratinocytes. Detected in suprabasal layers of embryonic epidermis and in stratified layers of embryonic tongue and palate. Detected in adult stomach.

The protein localises to the secreted. The sequence is that of Suprabasin (Sbsn) from Mus musculus (Mouse).